We begin with the raw amino-acid sequence, 228 residues long: L-ornithine N5-acetyltransferase NATA1 (228 aa).

The segment at 1-21 (MAPPTAAPEPNTVPETSPTGH) is disordered. One can recognise an N-acetyltransferase domain in the interval 77–227 (VFLLEISPSP…DALQAIDKLN (151 aa)). Residues 153 to 155 (IFM), 161 to 166 (RKGFGK), 192 to 195 (NVNA), and Tyr199 contribute to the acetyl-CoA site.

The protein belongs to the acetyltransferase family.

Its function is as follows. Acetyltransferase that converts ornithine to N5-acetylornithine, which is likely used in plant defense. In Arabidopsis thaliana (Mouse-ear cress), this protein is L-ornithine N5-acetyltransferase NATA1 (NATA1).